The sequence spans 226 residues: Ribonuclease 3 (226 aa).

The region spanning 6–128 (INRLQRKLGY…LIGGVFLDSD (123 aa)) is the RNase III domain. Glu-41 provides a ligand contact to Mg(2+). Asp-45 is a catalytic residue. Residues Asp-114 and Glu-117 each coordinate Mg(2+). Glu-117 is an active-site residue. The DRBM domain occupies 155–225 (DPKTRLQEYL…AEQALKKLEL (71 aa)).

The protein belongs to the ribonuclease III family. Homodimer. Mg(2+) serves as cofactor.

The protein resides in the cytoplasm. The catalysed reaction is Endonucleolytic cleavage to 5'-phosphomonoester.. In terms of biological role, digests double-stranded RNA. Involved in the processing of primary rRNA transcript to yield the immediate precursors to the large and small rRNAs (23S and 16S). Processes some mRNAs, and tRNAs when they are encoded in the rRNA operon. Processes pre-crRNA and tracrRNA of type II CRISPR loci if present in the organism. The polypeptide is Ribonuclease 3 (Klebsiella pneumoniae (strain 342)).